The primary structure comprises 360 residues: Phospho-N-acetylmuramoyl-pentapeptide-transferase (360 aa).

10 helical membrane passes run 26–46 (AIVS…RMIA), 72–92 (PTMG…LWAY), 94–114 (SNPY…IGFV), 132–152 (WKYF…YLAG), 168–188 (VMPQ…VGTG), 199–219 (GLAI…AWAT), 236–256 (AGEL…FLWF), 263–283 (VFMG…IAVL), 288–308 (FLLV…ILQV), and 338–358 (VIVR…ATLK).

The protein belongs to the glycosyltransferase 4 family. MraY subfamily. Mg(2+) serves as cofactor.

Its subcellular location is the cell inner membrane. The catalysed reaction is UDP-N-acetyl-alpha-D-muramoyl-L-alanyl-gamma-D-glutamyl-meso-2,6-diaminopimeloyl-D-alanyl-D-alanine + di-trans,octa-cis-undecaprenyl phosphate = di-trans,octa-cis-undecaprenyl diphospho-N-acetyl-alpha-D-muramoyl-L-alanyl-D-glutamyl-meso-2,6-diaminopimeloyl-D-alanyl-D-alanine + UMP. The protein operates within cell wall biogenesis; peptidoglycan biosynthesis. In terms of biological role, catalyzes the initial step of the lipid cycle reactions in the biosynthesis of the cell wall peptidoglycan: transfers peptidoglycan precursor phospho-MurNAc-pentapeptide from UDP-MurNAc-pentapeptide onto the lipid carrier undecaprenyl phosphate, yielding undecaprenyl-pyrophosphoryl-MurNAc-pentapeptide, known as lipid I. This Klebsiella pneumoniae (strain 342) protein is Phospho-N-acetylmuramoyl-pentapeptide-transferase.